Here is a 959-residue protein sequence, read N- to C-terminus: Ribonucleoside-diphosphate reductase large subunit (959 aa).

Substrate-binding positions include threonine 68, 83–84, and glycine 112; that span reads SC. A disulfide bridge connects residues cysteine 84 and cysteine 626. The active-site Proton acceptor is the asparagine 270. Residues 378–508 enclose the DOD-type homing endonuclease domain; sequence LPTLFGNSEH…IQLLLIGMGV (131 aa). Cysteine 611 acts as the Cysteine radical intermediate in catalysis. The active-site Proton acceptor is the glutamate 613. 751-755 provides a ligand contact to substrate; the sequence is PTATS.

Belongs to the ribonucleoside diphosphate reductase large chain family. Heterotetramer composed of a homodimer of the large subunit (R1) and a homodimer of the small subunit (R2). Larger multisubunit protein complex are also active, composed of (R1)n(R2)n.

The catalysed reaction is a 2'-deoxyribonucleoside 5'-diphosphate + [thioredoxin]-disulfide + H2O = a ribonucleoside 5'-diphosphate + [thioredoxin]-dithiol. Under complex allosteric control mediated by deoxynucleoside triphosphates and ATP binding. The type of nucleotide bound at the specificity site determines substrate preference. It seems probable that ATP makes the enzyme reduce CDP and UDP, dGTP favors ADP reduction and dTTP favors GDP reduction. Ribonucleoside-diphosphate reductase holoenzyme provides the precursors necessary for viral DNA synthesis. Allows virus growth in non-dividing cells. Catalyzes the biosynthesis of deoxyribonucleotides from the corresponding ribonucleotides. The protein is Ribonucleoside-diphosphate reductase large subunit of Acheta domesticus (House cricket).